Reading from the N-terminus, the 150-residue chain is Catabolic 3-dehydroquinase (150 aa).

Y24 (proton acceptor) is an active-site residue. Substrate contacts are provided by N75, H81, and D88. H101 (proton donor) is an active-site residue. Residues 102–103 (IS) and R112 each bind substrate.

The protein belongs to the type-II 3-dehydroquinase family. As to quaternary structure, homododecamer. Adopts a ring-like structure, composed of an arrangement of two hexameric rings stacked on top of one another.

It carries out the reaction 3-dehydroquinate = 3-dehydroshikimate + H2O. It participates in aromatic compound metabolism; 3,4-dihydroxybenzoate biosynthesis; 3,4-dihydroxybenzoate from 3-dehydroquinate: step 1/2. Functionally, is involved in the catabolism of quinate. Allows the utilization of quinate as carbon source via the beta-ketoadipate pathway. The sequence is that of Catabolic 3-dehydroquinase from Verticillium alfalfae (strain VaMs.102 / ATCC MYA-4576 / FGSC 10136) (Verticillium wilt of alfalfa).